The sequence spans 247 residues: Probable membrane transporter protein y4hK (247 aa).

6 helical membrane-spanning segments follow: residues 5-25, 31-51, 74-94, 121-141, 202-222, and 227-247; these read AIGL…VGQA, IAAM…ALAL, VYPF…VHLP, SALV…ITGA, FLPW…LIGS, and ASWL…KLLW.

It belongs to the 4-toluene sulfonate uptake permease (TSUP) (TC 2.A.102) family.

The protein localises to the cell membrane. In Sinorhizobium fredii (strain NBRC 101917 / NGR234), this protein is Probable membrane transporter protein y4hK.